The sequence spans 87 residues: Small ribosomal subunit protein bS18B (87 aa).

The protein belongs to the bacterial ribosomal protein bS18 family. Part of the 30S ribosomal subunit. Forms a tight heterodimer with protein bS6.

Binds as a heterodimer with protein bS6 to the central domain of the 16S rRNA, where it helps stabilize the platform of the 30S subunit. The protein is Small ribosomal subunit protein bS18B of Mycobacterium marinum (strain ATCC BAA-535 / M).